Consider the following 196-residue polypeptide: Large ribosomal subunit protein uL10 (196 aa).

Positions 167 to 196 (EKKAAEGPAEAPQPATEPPAEAPEAPADAE) are disordered.

This sequence belongs to the universal ribosomal protein uL10 family. In terms of assembly, part of the ribosomal stalk of the 50S ribosomal subunit. The N-terminus interacts with L11 and the large rRNA to form the base of the stalk. The C-terminus forms an elongated spine to which L12 dimers bind in a sequential fashion forming a multimeric L10(L12)X complex.

Functionally, forms part of the ribosomal stalk, playing a central role in the interaction of the ribosome with GTP-bound translation factors. The protein is Large ribosomal subunit protein uL10 of Mycolicibacterium paratuberculosis (strain ATCC BAA-968 / K-10) (Mycobacterium paratuberculosis).